The following is a 412-amino-acid chain: Transcription factor IIIA (412 aa).

The C2H2-type 1; degenerate zinc finger occupies 20–43 (YLCQYCGISRSKNYLITKHIQSHH). 3 C2H2-type zinc fingers span residues 66–88 (HTCQ…MQSH), 94–118 (FTCY…LLTH), and 123–148 (FKCP…KKYH). The disordered stretch occupies residues 144–207 (VKKYHSNDNR…NGNGDSQPAE (64 aa)). Residues 148 to 188 (HSNDNRDKDNTGLGDGDKDNTCKGDDDKEKSGSGGCEKENE) show a composition bias toward basic and acidic residues. Lys-185 is covalently cross-linked (Glycyl lysine isopeptide (Lys-Gly) (interchain with G-Cter in ubiquitin)). The C2H2-type 5 zinc finger occupies 215–239 (VVCKEIGCGKAFKYPSQLQKHQDSH). The segment at 247–272 (AFCSEPGCMKYFTNEECLKSHIRSCH) adopts a C2H2-type 6; degenerate zinc-finger fold. The segment at 275-296 (INCEICGSKHLKKNIKRHLRTH) adopts a C2H2-type 7; degenerate zinc-finger fold. The C2H2-type 8 zinc finger occupies 305-330 (IKCEVEGCSSTFSKASNLQKHMKAVH). The segment at 336–362 (FVCGFPGCGMRFAYKHVRNKHENSGYH) adopts a C2H2-type 9; degenerate zinc-finger fold. The Nuclear localization signal signature appears at 384-391 (LKRKQVTA).

In terms of processing, protein product TFIIIA (44 kDa) is proteolytically cleaved into TFIIIA-C (34 kDa). In terms of tissue distribution, expressed in seedlings, flowers, siliques and seeds.

The protein localises to the nucleus. Its subcellular location is the nucleolus. Its function is as follows. Essential protein. Isoform 1 is a transcription activator the binds both 5S rDNA and 5S rRNA and stimulates the transcription of 5S rRNA gene. Isoform 1 regulates 5S rRNA levels during development. This Arabidopsis thaliana (Mouse-ear cress) protein is Transcription factor IIIA.